We begin with the raw amino-acid sequence, 575 residues long: Acetylcholine receptor subunit beta-type acr-2 (575 aa).

The signal sequence occupies residues 1-20 (MKKTVKILLILITVFLKVHC). At 21 to 270 (NGGHDDEAAD…IRRKTLFYTV (250 aa)) the chain is on the extracellular side. The segment at 31–57 (FLSHTNIDDPNNSSDPNKNSDQGDTMG) is disordered. The segment covering 38-50 (DDPNNSSDPNKNS) has biased composition (low complexity). N-linked (GlcNAc...) asparagine glycosylation is found at asparagine 41, asparagine 42, asparagine 80, and asparagine 131. Cysteine 185 and cysteine 199 form a disulfide bridge. The next 3 helical transmembrane spans lie at 271–291 (ILIIPTVLMAFLSVMAFYLPV), 299–319 (LTISLLLALVVFLLLVSKILP), and 331–351 (LLLAFVLNITAVVGTVVIVNI). Topologically, residues 352 to 527 (YFRSALSHKM…WKYVAMVLDR (176 aa)) are cytoplasmic. The chain crosses the membrane as a helical span at residues 528–548 (LILLIFFGVTLGGTLGIICSA).

The protein belongs to the ligand-gated ion channel (TC 1.A.9) family. Acetylcholine receptor (TC 1.A.9.1) subfamily. As to quaternary structure, component of nicotinic acetylcholine receptor. In cholinergic motoneurons, composed of 2 non-alpha subunits acr-2 and acr-3, and 3 alpha subunits unc-38, unc-63 and acr-12. In terms of tissue distribution, specifically expressed in cholinergic ventral cord motoneurons of the VA, VB, DA and DB classes but not AS and VC classes. Expressed in PVQ and DVC neurons in the tail.

The protein resides in the postsynaptic cell membrane. Its subcellular location is the cell membrane. Non-alpha subunit of nicotinic acetylcholine receptor (nAChR). Acts in cholinergic motoneurons to regulate presynaptic neurotransmitter release, thereby ensuring normal level of excitation of cholinergic motoneurons during locomotion. The polypeptide is Acetylcholine receptor subunit beta-type acr-2 (acr-2) (Caenorhabditis elegans).